A 300-amino-acid polypeptide reads, in one-letter code: Putative S-adenosyl-L-methionine-dependent methyltransferase MAB_4328c (300 aa).

Residues D126 and 155-156 (DL) each bind S-adenosyl-L-methionine.

Belongs to the UPF0677 family.

Functionally, exhibits S-adenosyl-L-methionine-dependent methyltransferase activity. The chain is Putative S-adenosyl-L-methionine-dependent methyltransferase MAB_4328c from Mycobacteroides abscessus (strain ATCC 19977 / DSM 44196 / CCUG 20993 / CIP 104536 / JCM 13569 / NCTC 13031 / TMC 1543 / L948) (Mycobacterium abscessus).